A 156-amino-acid polypeptide reads, in one-letter code: Protein CROC-4 (156 aa).

Positions 46-71 are disordered; the sequence is RATSSTTDSSRAPSSPRPPGSTSHCG. Positions 48–59 are enriched in low complexity; it reads TSSTTDSSRAPS.

As to expression, expressed throughout the brain in the thalamus, subthalamic nucleus, corpus callosum, hippocampus, substantia nigra, caudate nucleus, and amygdala.

It is found in the nucleus. Functionally, may play a role in FOS signaling pathways involved in development and remodeling of neurons. Promotes transcription of the FOS promoter. This is Protein CROC-4 from Homo sapiens (Human).